The chain runs to 62 residues: Mu-elapitoxin-Na1a (62 aa).

4 disulfides stabilise this stretch: cysteine 3–cysteine 22, cysteine 15–cysteine 40, cysteine 44–cysteine 55, and cysteine 56–cysteine 61.

Belongs to the three-finger toxin family. Short-chain subfamily. Orphan group XV sub-subfamily. Expressed by the venom gland.

It is found in the secreted. Functionally, potent inhibitor of human Nav1.8/SCN10A (IC(50)=141-380 nM). Is highly selective for this channel and acts in a reversible manner. Shows a depolarizing shift of activation and hyperpolarizing shift of inactivation. In contrast to the very similar cytotoxin A5 (AC P62375), does not seem to bind integrin alpha-V/beta-3, since it does not promote or inhibit the proliferation of HUVECs and C-PAE cells. In vivo, in rodent models of inflammatory and neuropathic pain, it alleviates nociceptive behaviors more potently than does morphine. It displays no evident cytotoxic, hemolytic and cardiotoxic activities and produces no obvious adverse responses in mice even at a dose 30-fold higher than that producing a significant analgesic effect. This chain is Mu-elapitoxin-Na1a, found in Naja atra (Chinese cobra).